The chain runs to 177 residues: Large ribosomal subunit protein uL6 (177 aa).

This sequence belongs to the universal ribosomal protein uL6 family. Part of the 50S ribosomal subunit.

Its function is as follows. This protein binds to the 23S rRNA, and is important in its secondary structure. It is located near the subunit interface in the base of the L7/L12 stalk, and near the tRNA binding site of the peptidyltransferase center. The chain is Large ribosomal subunit protein uL6 from Brucella abortus (strain S19).